Consider the following 252-residue polypeptide: Low-density lipoprotein receptor-related protein 5-like protein (252 aa).

LDL-receptor class B repeat units lie at residues 3-45 (GHVY…NWVA), 46-88 (RSLY…HPEM), 89-132 (GLTY…DLQE), 133-175 (GKLY…LGDF), and 176-218 (IYWT…DKVV). The segment at 223-247 (HADRNGGAATCASSRPTQPGLAAPS) is disordered.

The sequence is that of Low-density lipoprotein receptor-related protein 5-like protein (LRP5L) from Homo sapiens (Human).